We begin with the raw amino-acid sequence, 397 residues long: MIAFRTLDDAVDLADKRVLVRVDLNVPMESGRVTDATRLKAILPTIRDITGKGGKAVLLAHLGRPKGRDESQSLAPVAKALEGELGRKVAFASDCIGDEAKSAVSRLASGEVIVLENTRFHAGEEKNAPDFIEALASLGDIYVNDAFSTAHRAHASTEGLARKLPAYAGRSMESEIEALTKALEAPQRPVLAVVGGSKVSSKLELLGNLVKKVDILVIGGGMANTFLAALGKKVGKSLCEHDLANTARDILKKAEAAGCEIVLPVDAVVATEFKANAAHRVTSVDDVKDDEMMLDAGPETVGIVKQKLDGAKTVVWNGPFGAFEMTPFDAATVAVARYVGDLTHKGRLLSVAGGGDTVAALNHAGTAERFSYVSTAGGAFLEWLEGKALPGVEALRR.

Residues 23–25, R38, 61–64, R119, and R152 each bind substrate; these read DLN and HLGR. ATP contacts are provided by residues K202, E324, and 354–357; that span reads GGDT.

The protein belongs to the phosphoglycerate kinase family. As to quaternary structure, monomer.

It is found in the cytoplasm. It carries out the reaction (2R)-3-phosphoglycerate + ATP = (2R)-3-phospho-glyceroyl phosphate + ADP. It functions in the pathway carbohydrate degradation; glycolysis; pyruvate from D-glyceraldehyde 3-phosphate: step 2/5. In Xanthobacter flavus, this protein is Phosphoglycerate kinase (pgk).